A 537-amino-acid chain; its full sequence is MPFKCIFLTGGVVSSLGKGLTAASLALILERQRLNVAMLKLDPYLNVDPGTMNPFEHGEIYVTDDGVETDLDLGHYHRFSSAALSRHSSATSGQIYARVIKREREGDYLGSTVQVIPHITNEIIQVILDAAKEHSPDVLIVEIGGTIGDIESLPFLEAIRQFRYDHSEDCLNIHMTYVPYLQAADEVKSKPTQHSVQTLRGIGIIPDAILCRSEKPLTQEVKSKISLFCNVPNRAVFNVIDVKHTIYEMPLMLAQEKIANFIGEKLKLATVPENLDDWRVLVNQLSQDLPKVKIGVVGKYVQHRDAYKSIFEALTHAALRLGHAAEIIPIDAEDENLTMELSQCDACLVPGGFGVRGWEGKIAAAKFCREQGIPYFGICLGMQVLVVEYARNVLNLDQANSLEMDPNTPHPIVYVMEGQDPLVATGGTMRLGAYPCLLKPGSKAHKAYNESSLIQERHRHRYEVNPDYIQSLEDHGLRIVGTCPPQGLCEIIEVSDHPWMIGVQFHPEFVSKLISPHPLFIAFIEAALVYSKDASHV.

The amidoligase domain stretch occupies residues 1 to 268 (MPFKCIFLTG…ANFIGEKLKL (268 aa)). Residue Ser-14 coordinates CTP. Ser-14 contributes to the UTP binding site. ATP-binding positions include 15 to 20 (SLGKGL) and Asp-72. Mg(2+)-binding residues include Asp-72 and Glu-142. Residues 149-151 (DIE), 188-193 (KSKPTQ), and Lys-224 each bind CTP. Residues 188 to 193 (KSKPTQ) and Lys-224 contribute to the UTP site. The 241-residue stretch at 293-533 (KIGVVGKYVQ…IEAALVYSKD (241 aa)) folds into the Glutamine amidotransferase type-1 domain. L-glutamine is bound at residue Gly-352. Residue Cys-379 is the Nucleophile; for glutamine hydrolysis of the active site. L-glutamine contacts are provided by residues 380–383 (LGMQ), Glu-403, and Arg-461. Residues His-506 and Glu-508 contribute to the active site.

Belongs to the CTP synthase family. As to quaternary structure, homotetramer.

It catalyses the reaction UTP + L-glutamine + ATP + H2O = CTP + L-glutamate + ADP + phosphate + 2 H(+). The enzyme catalyses L-glutamine + H2O = L-glutamate + NH4(+). The catalysed reaction is UTP + NH4(+) + ATP = CTP + ADP + phosphate + 2 H(+). It participates in pyrimidine metabolism; CTP biosynthesis via de novo pathway; CTP from UDP: step 2/2. With respect to regulation, allosterically activated by GTP, when glutamine is the substrate; GTP has no effect on the reaction when ammonia is the substrate. The allosteric effector GTP functions by stabilizing the protein conformation that binds the tetrahedral intermediate(s) formed during glutamine hydrolysis. Inhibited by the product CTP, via allosteric rather than competitive inhibition. Functionally, catalyzes the ATP-dependent amination of UTP to CTP with either L-glutamine or ammonia as the source of nitrogen. Regulates intracellular CTP levels through interactions with the four ribonucleotide triphosphates. The polypeptide is CTP synthase (Chlamydia pneumoniae (Chlamydophila pneumoniae)).